We begin with the raw amino-acid sequence, 695 residues long: Elongation factor G (695 aa).

Positions 4–279 (EKVRNIGISA…AVTQYLPSPL (276 aa)) constitute a tr-type G domain. Residues 13 to 20 (AHIDSGKT), 79 to 83 (DTPGH), and 133 to 136 (NKMD) each bind GTP.

This sequence belongs to the TRAFAC class translation factor GTPase superfamily. Classic translation factor GTPase family. EF-G/EF-2 subfamily.

Its subcellular location is the cytoplasm. Its function is as follows. Catalyzes the GTP-dependent ribosomal translocation step during translation elongation. During this step, the ribosome changes from the pre-translocational (PRE) to the post-translocational (POST) state as the newly formed A-site-bound peptidyl-tRNA and P-site-bound deacylated tRNA move to the P and E sites, respectively. Catalyzes the coordinated movement of the two tRNA molecules, the mRNA and conformational changes in the ribosome. The sequence is that of Elongation factor G from Rhodopirellula baltica (strain DSM 10527 / NCIMB 13988 / SH1).